A 156-amino-acid chain; its full sequence is Cyclic pyranopterin monophosphate synthase (156 aa).

Residues 75 to 77 (LCH) and 111 to 112 (ME) contribute to the substrate site. Asp126 is a catalytic residue.

It belongs to the MoaC family. Homohexamer; trimer of dimers.

The enzyme catalyses (8S)-3',8-cyclo-7,8-dihydroguanosine 5'-triphosphate = cyclic pyranopterin phosphate + diphosphate. It functions in the pathway cofactor biosynthesis; molybdopterin biosynthesis. In terms of biological role, catalyzes the conversion of (8S)-3',8-cyclo-7,8-dihydroguanosine 5'-triphosphate to cyclic pyranopterin monophosphate (cPMP). The sequence is that of Cyclic pyranopterin monophosphate synthase from Corynebacterium glutamicum (strain R).